The chain runs to 463 residues: 23S rRNA (uracil(1939)-C(5))-methyltransferase RlmD (463 aa).

The region spanning 14 to 78 (AVAPGSDPVV…PSYEQAHLLE (65 aa)) is the TRAM domain. The [4Fe-4S] cluster site is built by C91, C97, C100, and C179. S-adenosyl-L-methionine-binding residues include Q287, F316, N321, E337, N365, and D386. C419 functions as the Nucleophile in the catalytic mechanism.

It belongs to the class I-like SAM-binding methyltransferase superfamily. RNA M5U methyltransferase family. RlmD subfamily.

It catalyses the reaction uridine(1939) in 23S rRNA + S-adenosyl-L-methionine = 5-methyluridine(1939) in 23S rRNA + S-adenosyl-L-homocysteine + H(+). In terms of biological role, catalyzes the formation of 5-methyl-uridine at position 1939 (m5U1939) in 23S rRNA. The protein is 23S rRNA (uracil(1939)-C(5))-methyltransferase RlmD of Cupriavidus pinatubonensis (strain JMP 134 / LMG 1197) (Cupriavidus necator (strain JMP 134)).